A 217-amino-acid polypeptide reads, in one-letter code: Large ribosomal subunit protein uL1 (217 aa).

Belongs to the universal ribosomal protein uL1 family.

This chain is Large ribosomal subunit protein uL1 (RpL10Ab), found in Drosophila melanogaster (Fruit fly).